Reading from the N-terminus, the 315-residue chain is Methionyl-tRNA formyltransferase (315 aa).

113–116 (SLLP) contributes to the (6S)-5,6,7,8-tetrahydrofolate binding site.

It belongs to the Fmt family.

The enzyme catalyses L-methionyl-tRNA(fMet) + (6R)-10-formyltetrahydrofolate = N-formyl-L-methionyl-tRNA(fMet) + (6S)-5,6,7,8-tetrahydrofolate + H(+). Its function is as follows. Attaches a formyl group to the free amino group of methionyl-tRNA(fMet). The formyl group appears to play a dual role in the initiator identity of N-formylmethionyl-tRNA by promoting its recognition by IF2 and preventing the misappropriation of this tRNA by the elongation apparatus. This Shigella sonnei (strain Ss046) protein is Methionyl-tRNA formyltransferase.